The following is a 448-amino-acid chain: Ribosomal protein uS12 methylthiotransferase RimO (448 aa).

One can recognise an MTTase N-terminal domain in the interval 6-116 (PKVGIVSLGC…VVEAVHAAIP (111 aa)). Residues Cys15, Cys51, Cys80, Cys147, Cys151, and Cys154 each coordinate [4Fe-4S] cluster. The Radical SAM core domain occupies 133-371 (LTPHHYAYLK…EAARQIADER (239 aa)). The region spanning 373 to 439 (AAKEGTRIEV…DYDLWGDVVE (67 aa)) is the TRAM domain.

It belongs to the methylthiotransferase family. RimO subfamily. The cofactor is [4Fe-4S] cluster.

The protein resides in the cytoplasm. It catalyses the reaction L-aspartate(89)-[ribosomal protein uS12]-hydrogen + (sulfur carrier)-SH + AH2 + 2 S-adenosyl-L-methionine = 3-methylsulfanyl-L-aspartate(89)-[ribosomal protein uS12]-hydrogen + (sulfur carrier)-H + 5'-deoxyadenosine + L-methionine + A + S-adenosyl-L-homocysteine + 2 H(+). Functionally, catalyzes the methylthiolation of an aspartic acid residue of ribosomal protein uS12. In Paramagnetospirillum magneticum (strain ATCC 700264 / AMB-1) (Magnetospirillum magneticum), this protein is Ribosomal protein uS12 methylthiotransferase RimO.